The sequence spans 404 residues: MDMQADEMYRQDPLGSCGNPRQVSHITGRLSSLLGELPATWIEGEVTQLSPRRIGVFLTLKDMNESKHLEFFLPFDAFKDEVEVGNRVKIHGKLEFWATSGQIKVKGFEIQSVGIGELIERIARLRVQLALEGLYEHKRPLPFIPKLIGLVTGQNSDAEKDVVTNVLLRWPAAKFCTIYASMQGASCVSETISAIQKLDANNDVDVIIVARGGGSFHDLIGFSDEQMIRAVFAIKTPLISAIGHEADRPILDEVADLRASTPTDAAKRVVPDIADEKRLIKSAMSFLKKSYEPVIDKIKCDTLSWSQAFSNPFETFIAPRRREIDLFYQQMLTVVWANFSKTETEIAAIKKHLLAISPQNTLVRGYAMIEDETGRIISSADKLSAGDTVTLRLHDGLVRAEITQ.

This sequence belongs to the XseA family. As to quaternary structure, heterooligomer composed of large and small subunits.

Its subcellular location is the cytoplasm. The catalysed reaction is Exonucleolytic cleavage in either 5'- to 3'- or 3'- to 5'-direction to yield nucleoside 5'-phosphates.. Bidirectionally degrades single-stranded DNA into large acid-insoluble oligonucleotides, which are then degraded further into small acid-soluble oligonucleotides. The chain is Exodeoxyribonuclease 7 large subunit from Tropheryma whipplei (strain TW08/27) (Whipple's bacillus).